The sequence spans 107 residues: uncharacterized protein (107 aa).

This is an uncharacterized protein from Yersinia pseudotuberculosis serotype I (strain IP32953).